Here is a 389-residue protein sequence, read N- to C-terminus: tRNA (cytosine(72)-C(5))-methyltransferase (389 aa).

Residues 92 to 167 form the PUA domain; it reads LPVVVANKYA…LAVEVTLPKF (76 aa). S-adenosyl-L-methionine is bound by residues 209–215, Asp-233, Arg-238, Asp-260, Asp-277, and Tyr-304; that span reads AAAPGGK. Cys-327 functions as the Nucleophile in the catalytic mechanism.

The protein belongs to the class I-like SAM-binding methyltransferase superfamily. RsmB/NOP family.

The enzyme catalyses cytidine(72) in tRNA + S-adenosyl-L-methionine = 5-methylcytidine(72) in tRNA + S-adenosyl-L-homocysteine + H(+). The catalysed reaction is cytidine(72) in tRNA(Thr) + S-adenosyl-L-methionine = 5-methylcytidine(72) in tRNA(Thr) + S-adenosyl-L-homocysteine + H(+). It catalyses the reaction cytidine(72) in tRNA(Cys) + S-adenosyl-L-methionine = 5-methylcytidine(72) in tRNA(Cys) + S-adenosyl-L-homocysteine + H(+). Functionally, S-adenosyl-L-methionine-dependent methyltransferase that specifically methylates the C5 position of cytosine 72 in several tRNAs. This modification appears to slightly promote the thermal stability of P.horikoshii tRNAs, but does not affect their amino acid accepting activity. Four elements in the acceptor stems of tRNAs are essential for substrate recognition by this enzyme: the target site C72, the 3'-CCA terminus, U73 or G73, and the second base pair C2:G71. The sequence is that of tRNA (cytosine(72)-C(5))-methyltransferase from Pyrococcus horikoshii (strain ATCC 700860 / DSM 12428 / JCM 9974 / NBRC 100139 / OT-3).